A 236-amino-acid polypeptide reads, in one-letter code: GLIPR1-like protein 1 (236 aa).

Positions 1-27 (MALKKKLNFLWTLVLYLIASRLPKAFG) are cleaved as a signal peptide. Positions 46 to 178 (LNIHNELRRK…FSAGLFVCNY (133 aa)) constitute an SCP domain. Asn126 carries N-linked (GlcNAc...) asparagine glycosylation.

Belongs to the CRISP family. As to quaternary structure, part of a oolemmal binding multimeric complex (IZUMO1 complex) composed at least of IZUMO1 and GLIPR1L1; the complex assemblage is influenced by the maturation status of the male germ cell. Interacts with IZUMO1. In terms of processing, N-glycosylated. N-glycosylation decreases during the transit in the caput. Expressed in testis (at protein level). Little or no expression in other tissues tested.

The protein localises to the cytoplasmic vesicle. The protein resides in the secretory vesicle. Its subcellular location is the acrosome. It localises to the cell membrane. It is found in the membrane raft. The protein localises to the secreted. Functionally, required for optimal fertilization at the stage of sperm-oocyte fusion, plays a role in optimizing acrosome function, the translocation of IZUMO1 during the acrosome reaction and the fertilization process. Component of epididymosomes, one type of membranous microvesicules which mediate the transfer of lipids and proteins to spermatozoa plasma membrane during epididymal maturation. Also component of the CD9-positive microvesicules found in the cauda region. In Mus musculus (Mouse), this protein is GLIPR1-like protein 1.